The chain runs to 302 residues: Recombination-associated protein RdgC (302 aa).

Belongs to the RdgC family.

It is found in the cytoplasm. The protein localises to the nucleoid. In terms of biological role, may be involved in recombination. This Xylella fastidiosa (strain M12) protein is Recombination-associated protein RdgC.